The primary structure comprises 341 residues: GTP 3',8-cyclase (341 aa).

A Radical SAM core domain is found at Thr-17–Glu-235. Arg-26 contacts GTP. [4Fe-4S] cluster is bound by residues Cys-33 and Cys-37. Tyr-39 provides a ligand contact to S-adenosyl-L-methionine. Cys-40 provides a ligand contact to [4Fe-4S] cluster. Arg-77 serves as a coordination point for GTP. An S-adenosyl-L-methionine-binding site is contributed by Gly-81. Thr-108 is a GTP binding site. Position 132 (Ser-132) interacts with S-adenosyl-L-methionine. Lys-169 lines the GTP pocket. Met-203 serves as a coordination point for S-adenosyl-L-methionine. Cys-268 and Cys-271 together coordinate [4Fe-4S] cluster. GTP is bound at residue Arg-273 to Arg-275. Cys-285 lines the [4Fe-4S] cluster pocket.

Belongs to the radical SAM superfamily. MoaA family. As to quaternary structure, monomer and homodimer. [4Fe-4S] cluster serves as cofactor.

It carries out the reaction GTP + AH2 + S-adenosyl-L-methionine = (8S)-3',8-cyclo-7,8-dihydroguanosine 5'-triphosphate + 5'-deoxyadenosine + L-methionine + A + H(+). It functions in the pathway cofactor biosynthesis; molybdopterin biosynthesis. Catalyzes the cyclization of GTP to (8S)-3',8-cyclo-7,8-dihydroguanosine 5'-triphosphate. The chain is GTP 3',8-cyclase from Streptomyces coelicolor (strain ATCC BAA-471 / A3(2) / M145).